Here is a 134-residue protein sequence, read N- to C-terminus: Protein NrdI (134 aa).

Belongs to the NrdI family.

Its function is as follows. Probably involved in ribonucleotide reductase function. This is Protein NrdI from Rhizobium leguminosarum bv. trifolii (strain WSM2304).